Here is a 323-residue protein sequence, read N- to C-terminus: o-succinylbenzoate synthase (323 aa).

Lys134 acts as the Proton donor in catalysis. Asp162, Glu191, and Asp214 together coordinate Mg(2+). The active-site Proton acceptor is Lys236.

It belongs to the mandelate racemase/muconate lactonizing enzyme family. MenC type 1 subfamily. A divalent metal cation is required as a cofactor.

It catalyses the reaction (1R,6R)-6-hydroxy-2-succinyl-cyclohexa-2,4-diene-1-carboxylate = 2-succinylbenzoate + H2O. It participates in quinol/quinone metabolism; 1,4-dihydroxy-2-naphthoate biosynthesis; 1,4-dihydroxy-2-naphthoate from chorismate: step 4/7. It functions in the pathway quinol/quinone metabolism; menaquinone biosynthesis. Its function is as follows. Converts 2-succinyl-6-hydroxy-2,4-cyclohexadiene-1-carboxylate (SHCHC) to 2-succinylbenzoate (OSB). The polypeptide is o-succinylbenzoate synthase (Edwardsiella ictaluri (strain 93-146)).